The sequence spans 307 residues: Ribonuclease Z (307 aa).

Residues H63, H65, D67, H68, H143, D213, and H271 each coordinate Zn(2+). The active-site Proton acceptor is D67.

It belongs to the RNase Z family. In terms of assembly, homodimer. Zn(2+) is required as a cofactor.

It carries out the reaction Endonucleolytic cleavage of RNA, removing extra 3' nucleotides from tRNA precursor, generating 3' termini of tRNAs. A 3'-hydroxy group is left at the tRNA terminus and a 5'-phosphoryl group is left at the trailer molecule.. In terms of biological role, zinc phosphodiesterase, which displays some tRNA 3'-processing endonuclease activity. Probably involved in tRNA maturation, by removing a 3'-trailer from precursor tRNA. In Lactococcus lactis subsp. cremoris (strain MG1363), this protein is Ribonuclease Z.